The primary structure comprises 226 residues: PKHD-type hydroxylase PST_0995 (226 aa).

One can recognise a Fe2OG dioxygenase domain in the interval 78–178; that stretch reads KVFPPLFNCY…RLASFFWIQS (101 aa). Residues histidine 96, aspartate 98, and histidine 159 each contribute to the Fe cation site. Arginine 169 provides a ligand contact to 2-oxoglutarate.

It depends on Fe(2+) as a cofactor. L-ascorbate is required as a cofactor.

The sequence is that of PKHD-type hydroxylase PST_0995 from Stutzerimonas stutzeri (strain A1501) (Pseudomonas stutzeri).